A 483-amino-acid polypeptide reads, in one-letter code: uncharacterized protein (483 aa).

Residues 11 to 71 (RYRKGDIIEL…SRYLEARAIE (61 aa)) form the TRAM domain. Positions 84, 90, 93, and 187 each coordinate [4Fe-4S] cluster. S-adenosyl-L-methionine contacts are provided by Gln-312, Tyr-341, Glu-362, and Asp-412. The active-site Nucleophile is Cys-439.

The protein belongs to the class I-like SAM-binding methyltransferase superfamily. RNA M5U methyltransferase family.

This is an uncharacterized protein from Chlorobaculum tepidum (strain ATCC 49652 / DSM 12025 / NBRC 103806 / TLS) (Chlorobium tepidum).